A 553-amino-acid polypeptide reads, in one-letter code: Ergothioneine transport permease/ergothioneine binding protein EgtU (553 aa).

The ABC transmembrane type-1 domain occupies 57-236; the sequence is LAQHFIIVAL…LFSVLADKFV (180 aa). The next 6 helical transmembrane spans lie at 61–81, 98–118, 122–142, 182–202, 219–239, and 261–281; these read FIIV…IGVF, FLYT…IGVG, ALLV…YNAL, IAVV…AGGL, VAGS…VSVF, and VYTN…WLIP. The Periplasmic segment spans residues 282–553; it reads RNAIEEKPLV…AKDFLERLGL (272 aa). An ergothioneine binding domain region spans residues 288-549; it reads KPLVVATKPS…PKIVAKDFLE (262 aa).

This sequence in the N-terminal section; belongs to the binding-protein-dependent transport system permease family. The protein in the C-terminal section; belongs to the OsmX family. As to quaternary structure, the complex is composed of two ATP-binding proteins (EgtV) and two transmembrane proteins (EgtU).

It localises to the cell inner membrane. Part of the ABC transporter complex EgtUV involved in the uptake of ergothioneine (EGT), a natural low-molecular weight (LMW) thiol antioxidant which protects H.pylori against bleach stress. Responsible for the translocation of the substrate across the membrane. Also contains a C-terminal periplasmic solute-binding domain (SBD) which binds to ergothioneine with low-micromolar affinity. Cannot bind the structurally similar compounds glycine betaine, choline, proline, carnitine or histidine. This Helicobacter pylori (strain G27) protein is Ergothioneine transport permease/ergothioneine binding protein EgtU.